Consider the following 407-residue polypeptide: Na(+)-translocating NADH-quinone reductase subunit F (407 aa).

Residues 3 to 23 form a helical membrane-spanning segment; that stretch reads IILGVVMFTLIVLVLSGLILA. In terms of domain architecture, 2Fe-2S ferredoxin-type spans 32–126; sequence GDVVIEINNE…NMKIELPEEI (95 aa). Residues cysteine 69, cysteine 75, cysteine 78, and cysteine 110 each contribute to the [2Fe-2S] cluster site. The FAD-binding FR-type domain maps to 129–269; the sequence is VKKWECEVIS…SGPFGEFFAK (141 aa).

Belongs to the NqrF family. In terms of assembly, composed of six subunits; NqrA, NqrB, NqrC, NqrD, NqrE and NqrF. The cofactor is [2Fe-2S] cluster. FAD is required as a cofactor.

Its subcellular location is the cell inner membrane. It carries out the reaction a ubiquinone + n Na(+)(in) + NADH + H(+) = a ubiquinol + n Na(+)(out) + NAD(+). Functionally, NQR complex catalyzes the reduction of ubiquinone-1 to ubiquinol by two successive reactions, coupled with the transport of Na(+) ions from the cytoplasm to the periplasm. The first step is catalyzed by NqrF, which accepts electrons from NADH and reduces ubiquinone-1 to ubisemiquinone by a one-electron transfer pathway. This is Na(+)-translocating NADH-quinone reductase subunit F from Klebsiella pneumoniae subsp. pneumoniae (strain ATCC 700721 / MGH 78578).